The following is a 91-amino-acid chain: Soluble cytochrome b558 (91 aa).

Residues 8-88 enclose the Cytochrome b5 heme-binding domain; sequence LPVFTLEQVA…LQRYLIGTLE (81 aa). Cysteines 25 and 54 form a disulfide. The heme site is built by H43 and H71.

In Ectothiorhodospira shaposhnikovii (Ectothiorhodospira vacuolata), this protein is Soluble cytochrome b558.